A 149-amino-acid polypeptide reads, in one-letter code: Nucleoside diphosphate kinase (149 aa).

The ATP site is built by Lys9, Phe57, Arg85, Thr91, Arg102, and Asn112. His115 (pros-phosphohistidine intermediate) is an active-site residue.

The protein belongs to the NDK family. As to quaternary structure, homotetramer. It depends on Mg(2+) as a cofactor.

The protein localises to the cytoplasm. It catalyses the reaction a 2'-deoxyribonucleoside 5'-diphosphate + ATP = a 2'-deoxyribonucleoside 5'-triphosphate + ADP. The catalysed reaction is a ribonucleoside 5'-diphosphate + ATP = a ribonucleoside 5'-triphosphate + ADP. Its function is as follows. Major role in the synthesis of nucleoside triphosphates other than ATP. The ATP gamma phosphate is transferred to the NDP beta phosphate via a ping-pong mechanism, using a phosphorylated active-site intermediate. The polypeptide is Nucleoside diphosphate kinase (Synechocystis sp. (strain ATCC 27184 / PCC 6803 / Kazusa)).